A 232-amino-acid polypeptide reads, in one-letter code: 7-cyano-7-deazaguanine synthase (232 aa).

13–23 (LSGGLDSATVL) provides a ligand contact to ATP. Positions 194, 204, 207, and 210 each coordinate Zn(2+).

This sequence belongs to the QueC family. Zn(2+) is required as a cofactor.

The catalysed reaction is 7-carboxy-7-deazaguanine + NH4(+) + ATP = 7-cyano-7-deazaguanine + ADP + phosphate + H2O + H(+). Its pathway is purine metabolism; 7-cyano-7-deazaguanine biosynthesis. Its function is as follows. Catalyzes the ATP-dependent conversion of 7-carboxy-7-deazaguanine (CDG) to 7-cyano-7-deazaguanine (preQ(0)). This Hydrogenovibrio crunogenus (strain DSM 25203 / XCL-2) (Thiomicrospira crunogena) protein is 7-cyano-7-deazaguanine synthase.